A 546-amino-acid polypeptide reads, in one-letter code: Methionine--tRNA ligase (546 aa).

The short motif at 15–25 is the 'HIGH' region element; it reads PYANGPIHLGH. 4 residues coordinate Zn(2+): Cys146, Cys149, Cys159, and Cys162. Residues 332–336 carry the 'KMSKS' region motif; that stretch reads KMSKS. Lys335 contributes to the ATP binding site.

Belongs to the class-I aminoacyl-tRNA synthetase family. MetG type 1 subfamily. Monomer. Requires Zn(2+) as cofactor.

It is found in the cytoplasm. The catalysed reaction is tRNA(Met) + L-methionine + ATP = L-methionyl-tRNA(Met) + AMP + diphosphate. Its function is as follows. Is required not only for elongation of protein synthesis but also for the initiation of all mRNA translation through initiator tRNA(fMet) aminoacylation. This is Methionine--tRNA ligase from Coxiella burnetii (strain RSA 331 / Henzerling II).